The chain runs to 30 residues: Nattererin-2 (30 aa).

In terms of tissue distribution, expressed by the skin glands.

The protein localises to the secreted. Functionally, probably has antibacterial activity. This is Nattererin-2 from Physalaemus nattereri (Cuyaba dwarf frog).